The primary structure comprises 434 residues: Protein TolB homolog (434 aa).

The signal sequence occupies residues M1–A27. Residues S413–K434 form a disordered region.

It belongs to the TolB family.

Its subcellular location is the periplasm. This is Protein TolB homolog from Chlorobaculum tepidum (strain ATCC 49652 / DSM 12025 / NBRC 103806 / TLS) (Chlorobium tepidum).